Consider the following 222-residue polypeptide: Eukaryotic translation initiation factor 4E-2 (222 aa).

Residues 1 to 20 (MVDEVEKPVSLEESKTNTRE) show a composition bias toward basic and acidic residues. The disordered stretch occupies residues 1 to 35 (MVDEVEKPVSLEESKTNTREVEEEGEIVGESDDTM). The span at 21–33 (VEEEGEIVGESDD) shows a compositional bias: acidic residues. EIF4G-binding stretches follow at residues 47 to 50 (HALE) and 57 to 93 (FDNP…NNIH). MRNA is bound by residues 65–70 (KQAAWG), K97, and 115–116 (WE). C120 and C158 are oxidised to a cystine. The EIF4G-binding stretch occupies residues 141–150 (YTLLAMIGEQ). Residues 165-170 (RVRQEK) and 210-214 (KKLDR) each bind mRNA.

It belongs to the eukaryotic initiation factor 4E family. In terms of assembly, EIF4F is a multi-subunit complex, the composition of which varies with external and internal environmental conditions. It is composed of at least EIF4A, EIF4E and EIF4G. EIF4E is also known to interact with other partners. In higher plants two isoforms of EIF4F have been identified, named isoform EIF4F and isoform EIF(iso)4F. Isoform EIF4F has subunits p220 and p26, whereas isoform EIF(iso)4F has subunits p82 and p28. (Microbial infection) Interacts with potyvirus viral genome-linked protein (VPg); this interaction is possible in susceptible hosts but impaired in resistant plants. In terms of processing, according to the redox status, the Cys-120-Cys-158 disulfide bridge may have a role in regulating protein function by affecting its ability to bind capped mRNA. As to expression, strongly expressed in susceptible plants but not in resistant ones.

The protein localises to the nucleus. It is found in the cytoplasm. Component of the protein complex eIF4F, which is involved in the recognition of the mRNA cap, ATP-dependent unwinding of 5'-terminal secondary structure and recruitment of mRNA to the ribosome. Recognizes and binds the 7-methylguanosine-containing mRNA cap during an early step in the initiation of protein synthesis and facilitates ribosome binding by inducing the unwinding of the mRNAs secondary structures. Key component of recessive resistance to potyviruses. Functionally, (Microbial infection) Susceptibility host factor required for viral infection (e.g. potato virus Y (PVY) and pepper mottle virus (PepMoV)) by recruiting viral RNAs to the host ribosomal complex via an interaction with viral genome-linked protein (VPg). In Nicotiana tabacum (Common tobacco), this protein is Eukaryotic translation initiation factor 4E-2.